Reading from the N-terminus, the 425-residue chain is Histone-binding protein RBBP4-A (425 aa).

A2 is subject to N-acetylalanine. WD repeat units lie at residues Y32–G125, E126–G175, H176–F223, G225–D270, A271–E314, S315–G371, and G372–M404.

The protein belongs to the WD repeat RBAP46/RBAP48/MSI1 family. In terms of assembly, binds directly to histone H4, probably via helix 1 of the histone fold, a region that is not accessible when histone H4 is in chromatin. Probably forms a large corepressor complex that contains ncor1, sin3a, hdac1-A and/or hdac1-B, hdac2, rbbp4-A and/or rbbp4-B and possibly rbbp7.

The protein localises to the nucleus. It localises to the chromosome. It is found in the telomere. Functionally, core histone-binding subunit that may target chromatin assembly factors, chromatin remodeling factors and histone deacetylases to their histone substrates in a manner that is regulated by nucleosomal DNA. Component of several complexes which regulate chromatin metabolism. The sequence is that of Histone-binding protein RBBP4-A (rbbp4-a) from Xenopus laevis (African clawed frog).